The chain runs to 92 residues: UPF0237 protein MM_0082 (92 aa).

An ACT domain is found at 7-81 (IITVIGSDRV…KSLGVEVKVQ (75 aa)).

It belongs to the UPF0237 family.

The chain is UPF0237 protein MM_0082 from Methanosarcina mazei (strain ATCC BAA-159 / DSM 3647 / Goe1 / Go1 / JCM 11833 / OCM 88) (Methanosarcina frisia).